We begin with the raw amino-acid sequence, 229 residues long: Protein FMP52-2, mitochondrial (229 aa).

Residues 1–45 constitute a mitochondrion transit peptide; sequence MAAGAFILGSTGLCGYQMLRFAEKSSLFDKISTVGRKLPDFKSEK.

It belongs to the FMP52 family.

The protein localises to the mitochondrion outer membrane. The protein is Protein FMP52-2, mitochondrial (FMP522) of Scheffersomyces stipitis (strain ATCC 58785 / CBS 6054 / NBRC 10063 / NRRL Y-11545) (Yeast).